The following is a 337-amino-acid chain: Phosphate acyltransferase (337 aa).

The protein belongs to the PlsX family. As to quaternary structure, homodimer. Probably interacts with PlsY.

It is found in the cytoplasm. The enzyme catalyses a fatty acyl-[ACP] + phosphate = an acyl phosphate + holo-[ACP]. It functions in the pathway lipid metabolism; phospholipid metabolism. Functionally, catalyzes the reversible formation of acyl-phosphate (acyl-PO(4)) from acyl-[acyl-carrier-protein] (acyl-ACP). This enzyme utilizes acyl-ACP as fatty acyl donor, but not acyl-CoA. The chain is Phosphate acyltransferase from Latilactobacillus sakei subsp. sakei (strain 23K) (Lactobacillus sakei subsp. sakei).